The chain runs to 253 residues: U2 small nuclear ribonucleoprotein A' (253 aa).

4 LRR repeats span residues 19 to 40, 41 to 62, 63 to 84, and 87 to 108; these read KDRE…GIAK, DQDA…PFFP, RLHT…IAST, and NLTT…DPLR. The region spanning 121–159 is the LRRCT domain; sequence NPVTRKEHYRYWVIWRIPSVRFLDYQKVKDAERAKAKEL. Residues 228-253 are disordered; sequence ELNEGRIPGGALDAGEDSEDENQMQT. Residues 241 to 253 show a composition bias toward acidic residues; the sequence is AGEDSEDENQMQT.

This sequence belongs to the U2 small nuclear ribonucleoprotein A family. Associated with the spliceosome.

It localises to the nucleus. Involved in pre-mRNA splicing. This is U2 small nuclear ribonucleoprotein A' (lea1) from Aspergillus fumigatus (strain ATCC MYA-4609 / CBS 101355 / FGSC A1100 / Af293) (Neosartorya fumigata).